A 404-amino-acid chain; its full sequence is MAFPTYRPVQCSKLTDHELLRIPHSPSLEPLDYCIEPISYLRRTVYDLHTTVANRSSSRALLHKQPPVMFKSPFGANANPFGGASDGATVGGNAMHQYNFSRRTSVSAESLKPSADTYDNWTPPVHDKTNEQLSRLKTAIAGNFLFSHLDDEQSAQILGALIEKPIPAKDIKVISQGDAGEYFYVVEKGSFDVYVNEKGTLQPGPEGMGEKVGTIQAGGSFGELALMYNAPRAATVISAEPGCTLWALDRLTFRRILMESTFLAAACTRTSSEKFPCCRHSHHMSAQKSPTRWKLRSTPLVRRLSRRETRVTRFTCSRWRGRCLPGEMARESVKHYSKGDFFGELALLNDAPRAASIVATTDVKVASLGKSAFQRLLGPVEGIMRRTKYDDIKTGVEEMDPLQV.

The tract at residues 14–144 (LTDHELLRIP…RLKTAIAGNF (131 aa)) is dimerization and phosphorylation. Residue Ser105 is modified to Phosphoserine. 3',5'-cyclic AMP is bound by residues 145 to 276 (LFSH…EKFP), Glu223, Arg232, 277 to 398 (CCRH…GVEE), Glu344, and Arg353.

It belongs to the cAMP-dependent kinase regulatory chain family. As to quaternary structure, tetramer, composed of 2 regulatory (R) and 2 catalytic (C) subunits. In the presence of cAMP it dissociates into 2 active monomeric C subunits and an R dimer.

In terms of biological role, cAMP-dependent protein kinase PKA regulatory subunit. The chain is cAMP-dependent protein kinase regulatory subunit (PKAR) from Colletotrichum trifolii.